The sequence spans 508 residues: Ribose import ATP-binding protein RbsA 2 (508 aa).

2 ABC transporter domains span residues 6-241 and 254-499; these read LTIH…VGRE and ERSG…SGMG. Residue 38-45 participates in ATP binding; that stretch reads GENGAGKS.

It belongs to the ABC transporter superfamily. Ribose importer (TC 3.A.1.2.1) family. The complex is composed of an ATP-binding protein (RbsA), two transmembrane proteins (RbsC) and a solute-binding protein (RbsB).

The protein localises to the cell inner membrane. It catalyses the reaction D-ribose(out) + ATP + H2O = D-ribose(in) + ADP + phosphate + H(+). Its function is as follows. Part of the ABC transporter complex RbsABC involved in ribose import. Responsible for energy coupling to the transport system. The protein is Ribose import ATP-binding protein RbsA 2 of Rhizobium etli (strain ATCC 51251 / DSM 11541 / JCM 21823 / NBRC 15573 / CFN 42).